Here is a 490-residue protein sequence, read N- to C-terminus: Lysine--tRNA ligase (490 aa).

Mg(2+) contacts are provided by Glu398 and Glu405.

The protein belongs to the class-II aminoacyl-tRNA synthetase family. In terms of assembly, homodimer. It depends on Mg(2+) as a cofactor.

The protein resides in the cytoplasm. It carries out the reaction tRNA(Lys) + L-lysine + ATP = L-lysyl-tRNA(Lys) + AMP + diphosphate. This is Lysine--tRNA ligase from Metamycoplasma arthritidis (strain 158L3-1) (Mycoplasma arthritidis).